Consider the following 269-residue polypeptide: Flagellar brake protein YcgR (269 aa).

Positions 1 to 42 are disordered; that stretch reads MLREPMNQHDAPGPAETGADSDAETDAETDAETDAGAADDRY. Residues 19-33 are compositionally biased toward acidic residues; it reads ADSDAETDAETDAET. The region spanning 149-261 is the PilZ domain; the sequence is QRRRHFRART…MENFLQRLVF (113 aa).

It belongs to the YcgR family. In terms of assembly, monomer. Interacts with the flagellar basal bodies.

The protein localises to the bacterial flagellum basal body. Functionally, acts as a flagellar brake, regulating swimming and swarming in a bis-(3'-5') cyclic diguanylic acid (c-di-GMP)-dependent manner. Binds 1 c-di-GMP dimer per subunit. Increasing levels of c-di-GMP lead to decreased motility. In Cupriavidus taiwanensis (strain DSM 17343 / BCRC 17206 / CCUG 44338 / CIP 107171 / LMG 19424 / R1) (Ralstonia taiwanensis (strain LMG 19424)), this protein is Flagellar brake protein YcgR.